A 142-amino-acid chain; its full sequence is MEKSMMGFLENTELLTKEGVLSLSPLVLAFIGDAVYSLYIRTKIVAQKNQPVNFLHKETVKYVKAKAQAESVKRIYDLLSEEEKDIVRRGRNMKSNTTPKGVEVQAYRYATGFEALLGYLYLAGEFERLKNILELSVQVIEE.

Residue aspartate 33 is part of the active site.

It belongs to the MrnC RNase family. In terms of assembly, homodimer. Mg(2+) is required as a cofactor.

The protein resides in the cytoplasm. In terms of biological role, involved in correct processing of both the 5' and 3' ends of 23S rRNA precursor. Processes 30S rRNA precursor transcript even in absence of ribonuclease 3 (Rnc); Rnc processes 30S rRNA into smaller rRNA precursors. This is Mini-ribonuclease 3 from Thermoanaerobacter sp. (strain X514).